Consider the following 329-residue polypeptide: Biotin synthase (329 aa).

Positions 46-275 (FFGRRLKLVR…LNPKAELRAS (230 aa)) constitute a Radical SAM core domain. [4Fe-4S] cluster is bound by residues C64, C68, and C71. [2Fe-2S] cluster contacts are provided by C108, C140, C200, and R273.

The protein belongs to the radical SAM superfamily. Biotin synthase family. In terms of assembly, homodimer. Requires [4Fe-4S] cluster as cofactor. The cofactor is [2Fe-2S] cluster.

It carries out the reaction (4R,5S)-dethiobiotin + (sulfur carrier)-SH + 2 reduced [2Fe-2S]-[ferredoxin] + 2 S-adenosyl-L-methionine = (sulfur carrier)-H + biotin + 2 5'-deoxyadenosine + 2 L-methionine + 2 oxidized [2Fe-2S]-[ferredoxin]. It functions in the pathway cofactor biosynthesis; biotin biosynthesis; biotin from 7,8-diaminononanoate: step 2/2. Catalyzes the conversion of dethiobiotin (DTB) to biotin by the insertion of a sulfur atom into dethiobiotin via a radical-based mechanism. This Thermus thermophilus (strain ATCC BAA-163 / DSM 7039 / HB27) protein is Biotin synthase.